A 684-amino-acid polypeptide reads, in one-letter code: Glycine--tRNA ligase beta subunit (684 aa).

The protein belongs to the class-II aminoacyl-tRNA synthetase family. As to quaternary structure, tetramer of two alpha and two beta subunits.

The protein resides in the cytoplasm. It catalyses the reaction tRNA(Gly) + glycine + ATP = glycyl-tRNA(Gly) + AMP + diphosphate. In Pseudomonas entomophila (strain L48), this protein is Glycine--tRNA ligase beta subunit.